Here is a 210-residue protein sequence, read N- to C-terminus: Signal peptidase complex catalytic subunit SEC11 (210 aa).

Residues 1–21 (MLAGLSPHLSNLRRSLTQVLN) lie on the Cytoplasmic side of the membrane. The helical; Signal-anchor for type II membrane protein transmembrane segment at 22–38 (FALVLSTAFMMWKGLSI) threads the bilayer. Over 39-210 (YTNSSSPIVV…MGAMVILQRE (172 aa)) the chain is Lumenal. N-linked (GlcNAc...) asparagine glycosylation is present at Asn-41. Active-site charge relay system residues include Ser-53, His-92, and Asp-152. The interval 196–207 (VLLGIMGAMVIL) is C-terminal short (CTS) helix.

It belongs to the peptidase S26B family. In terms of assembly, component of the signal peptidase complex (SPC) composed of a catalytic subunit SEC11 and three accessory subunits SPC1, SPC2 and SPC3. The complex induces a local thinning of the ER membrane which is used to measure the length of the signal peptide (SP) h-region of protein substrates. This ensures the selectivity of the complex towards h-regions shorter than 18-20 amino acids. SPC associates with the translocon complex.

It localises to the endoplasmic reticulum membrane. It carries out the reaction Cleavage of hydrophobic, N-terminal signal or leader sequences from secreted and periplasmic proteins.. In terms of biological role, catalytic component of the signal peptidase complex (SPC) which catalyzes the cleavage of N-terminal signal sequences from nascent proteins as they are translocated into the lumen of the endoplasmic reticulum. Specifically cleaves N-terminal signal peptides that contain a hydrophobic alpha-helix (h-region) shorter than 18-20 amino acids. The sequence is that of Signal peptidase complex catalytic subunit SEC11 (SEC11) from Coccidioides posadasii (strain C735) (Valley fever fungus).